We begin with the raw amino-acid sequence, 548 residues long: Membrane protein insertase YidC (548 aa).

Residues 6–26 (NLLVIALLFVSFMIWQAWEQD) form a helical membrane-spanning segment. Residues 28–55 (NPQPQAQQTTQTTTTAAGSAADQGVPAS) are disordered. The segment covering 30-50 (QPQAQQTTQTTTTAAGSAADQ) has biased composition (low complexity). Helical transmembrane passes span 350-370 (FVGN…GIMY), 420-440 (LGGC…YYML), 458-478 (LSAQ…MFFI), and 499-519 (PVIF…YYIV).

This sequence belongs to the OXA1/ALB3/YidC family. Type 1 subfamily. As to quaternary structure, interacts with the Sec translocase complex via SecD. Specifically interacts with transmembrane segments of nascent integral membrane proteins during membrane integration.

The protein resides in the cell inner membrane. Functionally, required for the insertion and/or proper folding and/or complex formation of integral membrane proteins into the membrane. Involved in integration of membrane proteins that insert both dependently and independently of the Sec translocase complex, as well as at least some lipoproteins. Aids folding of multispanning membrane proteins. This is Membrane protein insertase YidC from Escherichia coli O139:H28 (strain E24377A / ETEC).